The following is a 228-amino-acid chain: RING1 and YY1-binding protein (228 aa).

Disordered stretches follow at residues 1 to 21 (MTMG…PAAD), 65 to 156 (QVAQ…RSTA), and 172 to 228 (DFKE…DESF). The segment at 21-50 (DEGFWDCSVCTFRNSAEAFKCSICDVRKGT) adopts a RanBP2-type zinc-finger fold. A compositionally biased stretch (basic and acidic residues) spans 76 to 98 (PKKEKKEKVEKQDKEKPEKDKEI). Lys77 is covalently cross-linked (Glycyl lysine isopeptide (Lys-Gly) (interchain with G-Cter in SUMO2)). Ser99 is subject to Phosphoserine. Over residues 113–122 (PKSDILKDPP) the composition is skewed to basic and acidic residues. 3 positions are modified to phosphoserine: Ser123, Ser127, and Ser130. A compositionally biased stretch (polar residues) spans 124 to 143 (EANSIQSANATTKTSETNHT). An interaction with GABPB1 and FANK1 region spans residues 143-226 (TSRPRLKNVD…KGDMSAVNDE (84 aa)). Low complexity predominate over residues 179–204 (SSSTSSSTVTSSAGSEQQNQSSSGSE). Ser227 bears the Phosphoserine mark.

In terms of assembly, monomer. Component of repressive BCOR complex containing Polycomb group subcomplex at least composed of BCOR, PCGF1, RING1 and RNF2/RING2. Component of PCR1-like complexes. Interacts with PCGF1. Part of a PCR1-like complex that contains AUTS2, PCGF5, RNF2, CSNK2B and RYBP. Interacts with RNF2; the interaction is direct. Interacts with CBX2, YAF2, RING1 and RNF2. Interacts with ubiquitin and ubiquitinated proteins. Interacts with ubiquitinated histone H2A. Interacts with apoptin, DEDD, FADD, CASP8, CASP10, YY1 and GABPB1. Together with GABPB1 and YY1, it forms a ternary complex, probably being the bridge factor between these two transcription factors. Interacts with MDM2, and thereby inhibits ubiquitination of TP53. Identified in a ternary complex containing MDM2, TP53 and RYBP. Interacts with FANK1; may prevent the ubiquitin-mediated proteasomal degradation of FANK1. Interacts with IFT57. In terms of processing, monoubiquitinated. In terms of tissue distribution, down-regulated in breast cancer tissues and in several breast cancer cell lines (at protein level). Widely expressed with highest levels in lymphoid tissues and placenta.

Its subcellular location is the nucleus. It is found in the cytoplasm. The protein localises to the nucleoplasm. In terms of biological role, component of a Polycomb group (PcG) multiprotein PRC1-like complex, a complex class required to maintain the transcriptionally repressive state of many genes, including Hox genes, throughout development. PcG PRC1-like complex acts via chromatin remodeling and modification of histones; it mediates monoubiquitination of histone H2A 'Lys-119', rendering chromatin heritably changed in its expressibility. Component of a PRC1-like complex that mediates monoubiquitination of histone H2A 'Lys-119' on the X chromosome and is required for normal silencing of one copy of the X chromosome in XX females. May stimulate ubiquitination of histone H2A 'Lys-119' by recruiting the complex to target sites. Inhibits ubiquitination and subsequent degradation of TP53, and thereby plays a role in regulating transcription of TP53 target genes. May also regulate the ubiquitin-mediated proteasomal degradation of other proteins like FANK1 to regulate apoptosis. May be implicated in the regulation of the transcription as a repressor of the transcriptional activity of E4TF1. May bind to DNA. May play a role in the repression of tumor growth and metastasis in breast cancer by down-regulating SRRM3. The protein is RING1 and YY1-binding protein (RYBP) of Homo sapiens (Human).